A 218-amino-acid chain; its full sequence is 1-Cys peroxiredoxin PER1 (218 aa).

The 161-residue stretch at 4–164 folds into the Thioredoxin domain; that stretch reads LTIGDTVPNL…VVRAVDSLLT (161 aa). The active-site Cysteine sulfenic acid (-SOH) intermediate is the C46. The Bipartite nuclear localization signal motif lies at 194–217; it reads KKMFPQGFETADLPSKKGYLRFTK.

This sequence belongs to the peroxiredoxin family. Prx6 subfamily. As to expression, embryo and aleurone cells.

It is found in the nucleus. The protein resides in the cytoplasm. It catalyses the reaction a hydroperoxide + [thioredoxin]-dithiol = an alcohol + [thioredoxin]-disulfide + H2O. Functionally, thiol-specific peroxidase that catalyzes the reduction of hydrogen peroxide and organic hydroperoxides to water and alcohols, respectively. Seems to contribute to the inhibition of germination during stress. The protein is 1-Cys peroxiredoxin PER1 (PER1) of Hordeum vulgare (Barley).